A 437-amino-acid polypeptide reads, in one-letter code: Adenosylmethionine-8-amino-7-oxononanoate aminotransferase (437 aa).

Residue Trp64 coordinates substrate. Pyridoxal 5'-phosphate is bound at residue 124 to 125 (GS). Residue Tyr157 participates in substrate binding. A pyridoxal 5'-phosphate-binding site is contributed by Asp254. Substrate contacts are provided by Lys283 and Gly316. The residue at position 283 (Lys283) is an N6-(pyridoxal phosphate)lysine. 317-318 (PT) is a binding site for pyridoxal 5'-phosphate. Arg400 is a substrate binding site.

It belongs to the class-III pyridoxal-phosphate-dependent aminotransferase family. BioA subfamily. As to quaternary structure, homodimer. Pyridoxal 5'-phosphate serves as cofactor.

The protein localises to the cytoplasm. It carries out the reaction (8S)-8-amino-7-oxononanoate + S-adenosyl-L-methionine = S-adenosyl-4-methylsulfanyl-2-oxobutanoate + (7R,8S)-7,8-diammoniononanoate. It participates in cofactor biosynthesis; biotin biosynthesis; 7,8-diaminononanoate from 8-amino-7-oxononanoate (SAM route): step 1/1. Functionally, catalyzes the transfer of the alpha-amino group from S-adenosyl-L-methionine (SAM) to 7-keto-8-aminopelargonic acid (KAPA) to form 7,8-diaminopelargonic acid (DAPA). It is the only aminotransferase known to utilize SAM as an amino donor. In Mycobacterium tuberculosis (strain CDC 1551 / Oshkosh), this protein is Adenosylmethionine-8-amino-7-oxononanoate aminotransferase (bioA).